We begin with the raw amino-acid sequence, 115 residues long: U31-theraphotoxin-Cg1b (115 aa).

An N-terminal signal peptide occupies residues 1 to 18; sequence MKLCVIIIASLMVASVSG. The propeptide occupies 19–51; the sequence is RLRKIKGTELDKKMLLEKLGHGMDIRFEETPRE. 4 disulfide bridges follow: C52-C67, C60-C73, C64-C113, and C66-C86.

The protein belongs to the neurotoxin 03 (Tx2) family. 02 subfamily. In terms of tissue distribution, expressed by the venom gland.

It is found in the secreted. Functionally, probable ion channel inhibitor. The sequence is that of U31-theraphotoxin-Cg1b from Chilobrachys guangxiensis (Chinese earth tiger tarantula).